We begin with the raw amino-acid sequence, 400 residues long: Eukaryotic translation initiation factor 3 subunit M (400 aa).

In terms of domain architecture, PCI spans 180–354 (LIAKIYSALV…QSFAVHRAQK (175 aa)).

Belongs to the eIF-3 subunit M family. Component of the eukaryotic translation initiation factor 3 (eIF-3) complex.

The protein resides in the cytoplasm. Component of the eukaryotic translation initiation factor 3 (eIF-3) complex, which is involved in protein synthesis of a specialized repertoire of mRNAs and, together with other initiation factors, stimulates binding of mRNA and methionyl-tRNAi to the 40S ribosome. The eIF-3 complex specifically targets and initiates translation of a subset of mRNAs involved in cell proliferation. In Yarrowia lipolytica (strain CLIB 122 / E 150) (Yeast), this protein is Eukaryotic translation initiation factor 3 subunit M.